A 200-amino-acid polypeptide reads, in one-letter code: Probable GTP-binding protein EngB (200 aa).

The EngB-type G domain maps to 26–200; the sequence is SIPEIAIAGR…IYEIAQCIKK (175 aa). Residues 34 to 41, 61 to 65, 80 to 83, 147 to 150, and 179 to 181 contribute to the GTP site; these read GRSNVGKS, GCTKQ, DLPG, TKID, and TSS. Ser41 and Thr63 together coordinate Mg(2+).

Belongs to the TRAFAC class TrmE-Era-EngA-EngB-Septin-like GTPase superfamily. EngB GTPase family. The cofactor is Mg(2+).

Its function is as follows. Necessary for normal cell division and for the maintenance of normal septation. The chain is Probable GTP-binding protein EngB from Ehrlichia chaffeensis (strain ATCC CRL-10679 / Arkansas).